Consider the following 526-residue polypeptide: Germ cell-less protein-like 2 (526 aa).

The interval 1–85 is disordered; it reads MGSSSSRVLG…DKQQPLLNTP (85 aa). The short motif at 49-55 is the Nuclear localization signal element; sequence SHKRKRS. Over residues 62 to 77 the composition is skewed to basic and acidic residues; sequence CDPDSHREEHEEEGDK. A Nuclear localization signal motif is present at residues 85 to 91; sequence PARKKLR. The 71-residue stretch at 108 to 178 folds into the BTB domain; that stretch reads SDIKICALGE…LYRDDVLIKP (71 aa).

As to quaternary structure, interacts with CUL3. Expressed predominantly in testis.

The protein resides in the nucleus matrix. It functions in the pathway protein modification; protein ubiquitination. Possible function in spermatogenesis. Probable substrate-specific adapter of an E3 ubiquitin-protein ligase complex which mediates the ubiquitination and subsequent proteasomal degradation of target proteins. The protein is Germ cell-less protein-like 2 of Homo sapiens (Human).